A 123-amino-acid chain; its full sequence is Urotensin-2 (123 aa).

The first 20 residues, 1–20 (MDRVPFCCLLFIGLLNPLLS), serve as a signal peptide directing secretion. 2 consecutive propeptides follow at residues 21–104 (LPVT…LART) and 107–109 (QHK). Positions 57 to 88 (RQTMGTEAGESPGEAGPSTETPTPRGSMRKAF) are disordered. A disulfide bridge links cysteine 117 with cysteine 122.

It belongs to the urotensin-2 family. Brain specific. Predominantly expressed in motoneurons of the brainstem and spinal cord.

The protein localises to the secreted. In terms of biological role, highly potent vasoconstrictor. This chain is Urotensin-2 (Uts2), found in Mus musculus (Mouse).